Reading from the N-terminus, the 231-residue chain is Flagellar L-ring protein (231 aa).

The first 18 residues, 1-18, serve as a signal peptide directing secretion; the sequence is MKHLLSVFALGGAVLLAG. Cys-19 is lipidated: N-palmitoyl cysteine. Cys-19 carries the S-diacylglycerol cysteine lipid modification.

This sequence belongs to the FlgH family. In terms of assembly, the basal body constitutes a major portion of the flagellar organelle and consists of four rings (L,P,S, and M) mounted on a central rod.

The protein localises to the cell outer membrane. It is found in the bacterial flagellum basal body. Assembles around the rod to form the L-ring and probably protects the motor/basal body from shearing forces during rotation. This Pseudomonas entomophila (strain L48) protein is Flagellar L-ring protein.